A 277-amino-acid polypeptide reads, in one-letter code: Shikimate dehydrogenase (NADP(+)) (277 aa).

Residues 15 to 17 (SLS) and threonine 62 each bind shikimate. Lysine 66 functions as the Proton acceptor in the catalytic mechanism. Asparagine 87 and aspartate 102 together coordinate shikimate. Residues 127 to 131 (GAGGA), 151 to 156 (NRTVDK), and isoleucine 219 contribute to the NADP(+) site. Shikimate is bound at residue tyrosine 221. Glycine 242 provides a ligand contact to NADP(+).

The protein belongs to the shikimate dehydrogenase family. Homodimer.

It carries out the reaction shikimate + NADP(+) = 3-dehydroshikimate + NADPH + H(+). The protein operates within metabolic intermediate biosynthesis; chorismate biosynthesis; chorismate from D-erythrose 4-phosphate and phosphoenolpyruvate: step 4/7. Involved in the biosynthesis of the chorismate, which leads to the biosynthesis of aromatic amino acids. Catalyzes the reversible NADPH linked reduction of 3-dehydroshikimate (DHSA) to yield shikimate (SA). The polypeptide is Shikimate dehydrogenase (NADP(+)) (Bacillus cereus (strain AH187)).